The chain runs to 447 residues: GTPase Der (447 aa).

2 consecutive EngA-type G domains span residues 3 to 167 (PVIA…VQER) and 181 to 354 (VKIA…AAAM). GTP contacts are provided by residues 9–16 (GRPNVGKS), 56–60 (DTGGF), 119–122 (NKAE), 187–194 (GRPNVGKS), 234–238 (DTAGL), and 299–302 (NKWD). In terms of domain architecture, KH-like spans 355-439 (VKLPTPQLTR…PLRIEFRTNK (85 aa)).

This sequence belongs to the TRAFAC class TrmE-Era-EngA-EngB-Septin-like GTPase superfamily. EngA (Der) GTPase family. As to quaternary structure, associates with the 50S ribosomal subunit.

Functionally, GTPase that plays an essential role in the late steps of ribosome biogenesis. This is GTPase Der from Cupriavidus pinatubonensis (strain JMP 134 / LMG 1197) (Cupriavidus necator (strain JMP 134)).